Reading from the N-terminus, the 88-residue chain is NADH-ubiquinone oxidoreductase chain 4L (88 aa).

The next 3 helical transmembrane spans lie at 1 to 21 (MNLS…NRKN), 22 to 42 (IILM…LVLM), and 55 to 75 (FSIY…SILV).

This sequence belongs to the complex I subunit 4L family.

Its subcellular location is the mitochondrion membrane. It catalyses the reaction a ubiquinone + NADH + 5 H(+)(in) = a ubiquinol + NAD(+) + 4 H(+)(out). Functionally, core subunit of the mitochondrial membrane respiratory chain NADH dehydrogenase (Complex I) that is believed to belong to the minimal assembly required for catalysis. Complex I functions in the transfer of electrons from NADH to the respiratory chain. The immediate electron acceptor for the enzyme is believed to be ubiquinone. The polypeptide is NADH-ubiquinone oxidoreductase chain 4L (ND4L) (Schizophyllum commune (Split gill fungus)).